Here is a 365-residue protein sequence, read N- to C-terminus: Cobalt-precorrin-5B C(1)-methyltransferase (365 aa).

This sequence belongs to the CbiD family.

It carries out the reaction Co-precorrin-5B + S-adenosyl-L-methionine = Co-precorrin-6A + S-adenosyl-L-homocysteine. The protein operates within cofactor biosynthesis; adenosylcobalamin biosynthesis; cob(II)yrinate a,c-diamide from sirohydrochlorin (anaerobic route): step 6/10. In terms of biological role, catalyzes the methylation of C-1 in cobalt-precorrin-5B to form cobalt-precorrin-6A. The polypeptide is Cobalt-precorrin-5B C(1)-methyltransferase (Methanococcus maripaludis (strain C6 / ATCC BAA-1332)).